We begin with the raw amino-acid sequence, 652 residues long: DNA ligase (652 aa).

NAD(+)-binding positions include 29–33, 78–79, and Glu107; these read DSEYD and SL. Lys109 functions as the N6-AMP-lysine intermediate in the catalytic mechanism. NAD(+) contacts are provided by Arg130, Glu164, Lys278, and Lys302. The Zn(2+) site is built by Cys395, Cys398, Cys413, and Cys418. Residues 577 to 652 form the BRCT domain; the sequence is DQQAALFGLT…IEDEDWLLNL (76 aa).

This sequence belongs to the NAD-dependent DNA ligase family. LigA subfamily. It depends on Mg(2+) as a cofactor. Mn(2+) serves as cofactor.

The catalysed reaction is NAD(+) + (deoxyribonucleotide)n-3'-hydroxyl + 5'-phospho-(deoxyribonucleotide)m = (deoxyribonucleotide)n+m + AMP + beta-nicotinamide D-nucleotide.. DNA ligase that catalyzes the formation of phosphodiester linkages between 5'-phosphoryl and 3'-hydroxyl groups in double-stranded DNA using NAD as a coenzyme and as the energy source for the reaction. It is essential for DNA replication and repair of damaged DNA. The polypeptide is DNA ligase (Streptococcus equi subsp. equi (strain 4047)).